A 481-amino-acid polypeptide reads, in one-letter code: Docking protein 1 (481 aa).

Position 1 is an N-acetylmethionine (Met1). The PH domain maps to 4 to 119; sequence AVMEGPLFLQ…WVQTLCRNAF (116 aa). Ser48 bears the Phosphoserine mark. Residues 151-259 form the IRS-type PTB domain; it reads EGSQFWVTVQ…HRQKAQGKAG (109 aa). A phosphoserine mark is found at Ser269 and Ser291. The tract at residues 270–293 is disordered; that stretch reads HEGEVAEGKLPSPPGPQELLDSPP. Tyr296 is subject to Phosphotyrosine. Residues 307–329 form a disordered region; the sequence is PCPSQDSLYSDPLDSTSAQAGEG. Over residues 310 to 325 the composition is skewed to polar residues; sequence SQDSLYSDPLDSTSAQ. Residues Tyr337 and Tyr341 each carry the phosphotyrosine modification. At Tyr362 the chain carries Phosphotyrosine; by INSR. Phosphotyrosine is present on Tyr377. Tyr398 bears the Phosphotyrosine; by INSR mark. Residues 404–481 are disordered; sequence PATDDYAVPP…KTGVKSEGST (78 aa). Residue Tyr409 is modified to Phosphotyrosine. Ser416 is subject to Phosphoserine. The span at 436–458 shows a compositional bias: polar residues; sequence ATGSGIKSHNSALYSQVQKSGAS. Position 449 is a phosphotyrosine (Tyr449). Position 460 is a phosphoserine (Ser460).

It belongs to the DOK family. Type A subfamily. In terms of assembly, interacts with ABL1. Interacts with RasGAP and INPP5D/SHIP1. Interacts directly with phosphorylated ITGB3. Interacts with SRMS (via the SH2 and SH3 domains). Post-translationally, constitutively tyrosine-phosphorylated. Phosphorylated by TEC. Phosphorylated by LYN. Phosphorylated on tyrosine residues by the insulin receptor kinase. Results in the negative regulation of the insulin signaling pathway. Phosphorylated on tyrosine residues by SRMS. As to expression, expressed in pancreas, heart, leukocyte and spleen. Expressed in both resting and activated peripheral blood T-cells. Expressed in breast cancer.

Its subcellular location is the cytoplasm. It localises to the nucleus. It is found in the perinuclear region. Its function is as follows. DOK proteins are enzymatically inert adaptor or scaffolding proteins. They provide a docking platform for the assembly of multimolecular signaling complexes. DOK1 appears to be a negative regulator of the insulin signaling pathway. Modulates integrin activation by competing with talin for the same binding site on ITGB3. The protein is Docking protein 1 (DOK1) of Homo sapiens (Human).